The chain runs to 392 residues: Flagellar P-ring protein (392 aa).

An N-terminal signal peptide occupies residues 1–38 (MKPFARRALLTAEPIRALLLAASLLAATLGLMPAEAFG).

This sequence belongs to the FlgI family. The basal body constitutes a major portion of the flagellar organelle and consists of four rings (L,P,S, and M) mounted on a central rod.

The protein localises to the periplasm. It localises to the bacterial flagellum basal body. Its function is as follows. Assembles around the rod to form the L-ring and probably protects the motor/basal body from shearing forces during rotation. The sequence is that of Flagellar P-ring protein from Paramagnetospirillum magneticum (strain ATCC 700264 / AMB-1) (Magnetospirillum magneticum).